A 100-amino-acid polypeptide reads, in one-letter code: MFAVIKTGGKQYKVAENDVIDIEKLEADEGATVEFDSVLALGDTVGLPTIAGAKVTGEVLSQFRGEKVIIFKKHRRQNYRRKNGHRQFLTRVRITGFAGV.

It belongs to the bacterial ribosomal protein bL21 family. In terms of assembly, part of the 50S ribosomal subunit. Contacts protein L20.

Its function is as follows. This protein binds to 23S rRNA in the presence of protein L20. This is Large ribosomal subunit protein bL21 from Rhodospirillum rubrum (strain ATCC 11170 / ATH 1.1.1 / DSM 467 / LMG 4362 / NCIMB 8255 / S1).